Reading from the N-terminus, the 277-residue chain is Methylglyoxal reductase DkgA (277 aa).

Catalysis depends on Tyr-51, which acts as the Proton donor. Position 107 (His-107) interacts with substrate. Position 187–241 (187–241 (SPLAQGGKGVFDQEIIRKLAQQYNKTPAQIVIRWHLDSGLIVIPKSVTPARIREN)) interacts with NADP(+).

Belongs to the aldo/keto reductase family. Monomer.

It is found in the cytoplasm. The enzyme catalyses hydroxyacetone + NADP(+) = methylglyoxal + NADPH + H(+). Its function is as follows. Aldo-keto reductase that significantly contributes to cellular methylglyoxal detoxification by catalyzing the NADPH-dependent conversion of methylglyoxal to acetol. The sequence is that of Methylglyoxal reductase DkgA from Yersinia pestis.